A 632-amino-acid polypeptide reads, in one-letter code: MGLTNCCSHEELMSRLVDSVKEISGFSSSRGFIGKIQGDLVRRITLLSPFFEELIDVNVELKKDQITGFEAMRIALDSSLELFRSVNGGSKLFQLFDRDSLVEKFRDMTVEIEAALSQIPYEKIEVSEEVREQVQLLHFQFKRAKERWEESDLQLSHDLAMAENVMDPDPIILKRLSQELQLTTIDELKKESHAIHEYFLSYDGDPDDCFERMSSLLKNLVDFVTMESSDPDPSTGSRIVSRHRSPVIPEYFRCPISLELMKDPVIVSTGQTYERSSIQKWLDAGHKTCPKSQETLLHAGLTPNYVLKSLIALWCESNGIELPQNQGSCRTTKIGGSSSSDCDRTFVLSLLEKLANGTTEQQRAAAGELRLLAKRNVDNRVCIAEAGAIPLLVELLSSPDPRTQEHSVTALLNLSINEGNKGAIVDAGAITDIVEVLKNGSMEARENAAATLFSLSVIDENKVAIGAAGAIQALISLLEEGTRRGKKDAATAIFNLCIYQGNKSRAVKGGIVDPLTRLLKDAGGGMVDEALAILAILSTNQEGKTAIAEAESIPVLVEIIRTGSPRNRENAAAILWYLCIGNIERLNVAREVGADVALKELTENGTDRAKRKAASLLELIQQTEGVAVTTVP.

Residues 247-321 form the U-box domain; the sequence is VIPEYFRCPI…ALWCESNGIE (75 aa). 5 ARM repeats span residues 377–416, 418–457, 459–498, 500–539, and 541–580; these read VDNRVCIAEAGAIPLLVELLSSPDPRTQEHSVTALLNLSI, EGNKGAIVDAGAITDIVEVLKNGSMEARENAAATLFSLSV, DENKVAIGAAGAIQALISLLEEGTRRGKKDAATAIFNLCI, QGNKSRAVKGGIVDPLTRLLKDAGGGMVDEALAILAILST, and QEGKTAIAEAESIPVLVEIIRTGSPRNRENAAAILWYLCI.

In terms of assembly, homodimer. Interacts with SNL1. Binds to SD11, SD16, SD17, SD18, SD113, SD129 and SD25. In terms of tissue distribution, expressed in flowers, green siliques, seeds and rosette leaves.

It carries out the reaction S-ubiquitinyl-[E2 ubiquitin-conjugating enzyme]-L-cysteine + [acceptor protein]-L-lysine = [E2 ubiquitin-conjugating enzyme]-L-cysteine + N(6)-ubiquitinyl-[acceptor protein]-L-lysine.. It functions in the pathway protein modification; protein ubiquitination. In terms of biological role, functions as an E3 ubiquitin ligase with specific E2 ubiquitin-conjugating enzymes. Undergoes auto-ubiquitination. The chain is U-box domain-containing protein 14 (PUB14) from Arabidopsis thaliana (Mouse-ear cress).